Reading from the N-terminus, the 184-residue chain is Shikimate kinase (184 aa).

12-17 (GSGKST) contacts ATP. Ser16 is a binding site for Mg(2+). Residues Asp34, Arg58, and Gly80 each coordinate substrate. Arg117 provides a ligand contact to ATP. Arg136 lines the substrate pocket. Arg153 serves as a coordination point for ATP. Residues 164 to 184 (SRLDDPTPNTSPSSTASGAAT) form a disordered region. A compositionally biased stretch (low complexity) spans 169-184 (PTPNTSPSSTASGAAT).

It belongs to the shikimate kinase family. Monomer. Requires Mg(2+) as cofactor.

The protein localises to the cytoplasm. The catalysed reaction is shikimate + ATP = 3-phosphoshikimate + ADP + H(+). Its pathway is metabolic intermediate biosynthesis; chorismate biosynthesis; chorismate from D-erythrose 4-phosphate and phosphoenolpyruvate: step 5/7. Catalyzes the specific phosphorylation of the 3-hydroxyl group of shikimic acid using ATP as a cosubstrate. This Mycobacterium ulcerans (strain Agy99) protein is Shikimate kinase.